The primary structure comprises 273 residues: Dermonecrotic toxin LsaSicTox-alphaIB1bii (273 aa).

Residue His-5 is part of the active site. Residues Glu-25 and Asp-27 each coordinate Mg(2+). His-41 functions as the Nucleophile in the catalytic mechanism. Intrachain disulfides connect Cys-45–Cys-51 and Cys-47–Cys-190. Residue Asp-85 participates in Mg(2+) binding.

This sequence belongs to the arthropod phospholipase D family. Class II subfamily. Requires Mg(2+) as cofactor. In terms of tissue distribution, expressed by the venom gland.

The protein localises to the secreted. The catalysed reaction is an N-(acyl)-sphingosylphosphocholine = an N-(acyl)-sphingosyl-1,3-cyclic phosphate + choline. It carries out the reaction an N-(acyl)-sphingosylphosphoethanolamine = an N-(acyl)-sphingosyl-1,3-cyclic phosphate + ethanolamine. The enzyme catalyses a 1-acyl-sn-glycero-3-phosphocholine = a 1-acyl-sn-glycero-2,3-cyclic phosphate + choline. It catalyses the reaction a 1-acyl-sn-glycero-3-phosphoethanolamine = a 1-acyl-sn-glycero-2,3-cyclic phosphate + ethanolamine. Its function is as follows. Dermonecrotic toxins cleave the phosphodiester linkage between the phosphate and headgroup of certain phospholipids (sphingolipid and lysolipid substrates), forming an alcohol (often choline) and a cyclic phosphate. This toxin acts on sphingomyelin (SM). It may also act on ceramide phosphoethanolamine (CPE), lysophosphatidylcholine (LPC) and lysophosphatidylethanolamine (LPE), but not on lysophosphatidylserine (LPS), and lysophosphatidylglycerol (LPG). It acts by transphosphatidylation, releasing exclusively cyclic phosphate products as second products. Induces dermonecrosis, hemolysis, increased vascular permeability, edema, inflammatory response, and platelet aggregation. This chain is Dermonecrotic toxin LsaSicTox-alphaIB1bii, found in Loxosceles sabina (Tucson recluse spider).